The following is a 244-amino-acid chain: 6-carboxyhexanoate--CoA ligase (244 aa).

This sequence belongs to the BioW family. In terms of assembly, homodimer. The cofactor is Mg(2+).

It carries out the reaction heptanedioate + ATP + CoA = 6-carboxyhexanoyl-CoA + AMP + diphosphate. Its pathway is metabolic intermediate metabolism; pimeloyl-CoA biosynthesis; pimeloyl-CoA from pimelate: step 1/1. Catalyzes the transformation of pimelate into pimeloyl-CoA with concomitant hydrolysis of ATP to AMP. In Hydrogenobacter thermophilus (strain DSM 6534 / IAM 12695 / TK-6), this protein is 6-carboxyhexanoate--CoA ligase.